The following is a 181-amino-acid chain: Prepronociceptin (181 aa).

A signal peptide spans 1–19 (MKILFCDVLLLSLLSSVFS). Positions 20-95 (SCPEDCLTCQ…QSKASEMQHL (76 aa)) are excised as a propeptide. Residues 103–125 (SVVQARDAEPEADAEPVADEADE) form a disordered region. Repeat copies occupy residues 109 to 114 (DAEPEA) and 115 to 120 (DAEPVA). Residues 109-120 (DAEPEADAEPVA) form a 2 X 6 AA tandem repeats of D-A-E-P-X-A region. Positions 112–125 (PEADAEPVADEADE) are enriched in acidic residues. Residues 174-181 (TLHQNGNV) constitute a propeptide that is removed on maturation.

The protein belongs to the opioid neuropeptide precursor family. Specific enzymatic cleavages at paired basic residues probably yield other active peptides besides nociceptin. Post-translationally, the N-terminal domain contains 6 conserved cysteines thought to be involved in disulfide bonding and/or processing. As to expression, expressed predominantly in the spinal cord and brain, being more abundant in the hypothalamus and striatum. Also found in small amounts in ovary.

The protein resides in the secreted. Functionally, ligand of the opioid receptor-like receptor OPRL1. It may act as a transmitter in the brain by modulating nociceptive and locomotor behavior. May be involved in neuronal differentiation and development. Blocks nociceptin action in pain transmission by inhibiting nociceptin-induced hyperalgesia and allodynia. In terms of biological role, has potent analgesic activity. This chain is Prepronociceptin (Pnoc), found in Rattus norvegicus (Rat).